Here is a 382-residue protein sequence, read N- to C-terminus: UDP-N-acetylglucosamine--N-acetylmuramyl-(pentapeptide) pyrophosphoryl-undecaprenol N-acetylglucosamine transferase (382 aa).

Residues 17 to 19, Asn137, Arg179, Ser213, and Gln308 contribute to the UDP-N-acetyl-alpha-D-glucosamine site; that span reads TAG.

Belongs to the glycosyltransferase 28 family. MurG subfamily.

It localises to the cell membrane. It carries out the reaction di-trans,octa-cis-undecaprenyl diphospho-N-acetyl-alpha-D-muramoyl-L-alanyl-D-glutamyl-meso-2,6-diaminopimeloyl-D-alanyl-D-alanine + UDP-N-acetyl-alpha-D-glucosamine = di-trans,octa-cis-undecaprenyl diphospho-[N-acetyl-alpha-D-glucosaminyl-(1-&gt;4)]-N-acetyl-alpha-D-muramoyl-L-alanyl-D-glutamyl-meso-2,6-diaminopimeloyl-D-alanyl-D-alanine + UDP + H(+). Its pathway is cell wall biogenesis; peptidoglycan biosynthesis. Cell wall formation. Catalyzes the transfer of a GlcNAc subunit on undecaprenyl-pyrophosphoryl-MurNAc-pentapeptide (lipid intermediate I) to form undecaprenyl-pyrophosphoryl-MurNAc-(pentapeptide)GlcNAc (lipid intermediate II). The sequence is that of UDP-N-acetylglucosamine--N-acetylmuramyl-(pentapeptide) pyrophosphoryl-undecaprenol N-acetylglucosamine transferase from Rhodococcus jostii (strain RHA1).